Reading from the N-terminus, the 304-residue chain is Secreted mono- and diacylglycerol lipase MDL4 (304 aa).

Residues 1 to 19 (MRFGGVVSLVLGFIVSVLA) form the signal peptide. A disulfide bridge connects residues cysteine 55 and cysteine 297. Asparagine 102 and asparagine 161 each carry an N-linked (GlcNAc...) asparagine glycan. The Nucleophile role is filled by serine 171. The active site involves aspartate 228. An N-linked (GlcNAc...) asparagine glycan is attached at asparagine 253. The active site involves histidine 281.

It belongs to the AB hydrolase superfamily. Lipase family. Class 3 subfamily.

The protein resides in the secreted. Its subcellular location is the cell wall. The catalysed reaction is a monoacylglycerol + H2O = glycerol + a fatty acid + H(+). The enzyme catalyses a diacylglycerol + H2O = a monoacylglycerol + a fatty acid + H(+). Secreted lipase involved in Dandruff and seborrheic dermatitis (D/SD) probably via lipase-mediated breakdown of sebaceous lipids and release of irritating free fatty acids. Shows activity against monoglyceride and diglyceride substrates, but not triglyceride substrates and does not exhibit regio-selective production of diacylglycerols. Cleaves oleic acid from 1,2 isomers of diolein on both the 1 and the 2 position of the glycerol backbone, resulting mainly in free fatty acids but no monoolein is detected. Shows activity on monoolein and liberates mostly free fatty acids, but can also perform the reverse reaction and produce diolein. The polypeptide is Secreted mono- and diacylglycerol lipase MDL4 (Malassezia globosa (strain ATCC MYA-4612 / CBS 7966) (Dandruff-associated fungus)).